Reading from the N-terminus, the 357-residue chain is Pheromone receptor 1 (357 aa).

A run of 7 helical transmembrane segments spans residues 5 to 25 (ITPFFALVAFFLVLMPFAWHI), 32 to 52 (LIMLSIWLMLGNLDNFVNSMV), 67 to 90 (LSVRLRHLLFIAIPASNLAIARKL), 110 to 130 (VIIDLLICLGIPIIYTSLMIV), 145 to 165 (WPMMVFSWLWVLLVAAPVIVV), 206 to 226 (LLLLTAIDMLLFFPIYVGTIA), and 268 to 288 (LILARLVCPLSAYIFFAMFGL). Residues 338–357 (ANTSTKSEKSDIDMRGSEAA) are disordered. Residues 343 to 357 (KSEKSDIDMRGSEAA) are compositionally biased toward basic and acidic residues.

Belongs to the G-protein coupled receptor 4 family.

It localises to the membrane. Receptor for the A2 pheromone, a prenylated mating factor. The chain is Pheromone receptor 1 (PRA1) from Mycosarcoma maydis (Corn smut fungus).